The primary structure comprises 467 residues: Cobyrinate a,c-diamide synthase (467 aa).

One can recognise a GATase cobBQ-type domain in the interval 256–449 (RVGYAADQAF…AHIHVEGAPE (194 aa)). Cysteine 338 functions as the Nucleophile in the catalytic mechanism.

It belongs to the CobB/CbiA family. Mg(2+) is required as a cofactor.

It carries out the reaction cob(II)yrinate + 2 L-glutamine + 2 ATP + 2 H2O = cob(II)yrinate a,c diamide + 2 L-glutamate + 2 ADP + 2 phosphate + 2 H(+). It functions in the pathway cofactor biosynthesis; adenosylcobalamin biosynthesis; cob(II)yrinate a,c-diamide from sirohydrochlorin (anaerobic route): step 10/10. Its function is as follows. Catalyzes the ATP-dependent amidation of the two carboxylate groups at positions a and c of cobyrinate, using either L-glutamine or ammonia as the nitrogen source. This is Cobyrinate a,c-diamide synthase from Magnetococcus marinus (strain ATCC BAA-1437 / JCM 17883 / MC-1).